Consider the following 68-residue polypeptide: Cell division protein ZapB (68 aa).

The stretch at leucine 3–leucine 58 forms a coiled coil.

The protein belongs to the ZapB family. Homodimer. The ends of the coiled-coil dimer bind to each other, forming polymers. Interacts with FtsZ.

Its subcellular location is the cytoplasm. In terms of biological role, non-essential, abundant cell division factor that is required for proper Z-ring formation. It is recruited early to the divisome by direct interaction with FtsZ, stimulating Z-ring assembly and thereby promoting cell division earlier in the cell cycle. Its recruitment to the Z-ring requires functional FtsA or ZipA. The protein is Cell division protein ZapB of Shewanella loihica (strain ATCC BAA-1088 / PV-4).